A 157-amino-acid polypeptide reads, in one-letter code: UPF0756 membrane protein BH3161 (157 aa).

The next 4 helical transmembrane spans lie at 1–21, 54–74, 87–107, and 117–137; these read MISQ…LAKN, LGVT…EIGF, WVAL…IDLL, and LVLG…GPLI.

The protein belongs to the UPF0756 family.

It localises to the cell membrane. The polypeptide is UPF0756 membrane protein BH3161 (Halalkalibacterium halodurans (strain ATCC BAA-125 / DSM 18197 / FERM 7344 / JCM 9153 / C-125) (Bacillus halodurans)).